The chain runs to 303 residues: E3 ubiquitin-protein ligase SINA-like 3 (303 aa).

The tract at residues 1–30 (MENITNNSERSLDRPKRQRPVSMENVGGTA) is disordered. The segment at 49–85 (CPICYHKLGAPIYQCDNGHIACSSCCKKVKYKCPYCS) adopts an RING-type zinc-finger fold. The tract at residues 99–286 (IVEAVVVSCP…MSIPYYLLDE (188 aa)) is SBD. An SIAH-type zinc finger spans residues 102-162 (AVVVSCPNAK…LYRHYHAEHK (61 aa)). Residues cysteine 107, cysteine 114, histidine 128, cysteine 132, cysteine 139, cysteine 144, histidine 156, and histidine 161 each coordinate Zn(2+).

Belongs to the SINA (Seven in absentia) family.

The enzyme catalyses S-ubiquitinyl-[E2 ubiquitin-conjugating enzyme]-L-cysteine + [acceptor protein]-L-lysine = [E2 ubiquitin-conjugating enzyme]-L-cysteine + N(6)-ubiquitinyl-[acceptor protein]-L-lysine.. The protein operates within protein modification; protein ubiquitination. Its function is as follows. E3 ubiquitin-protein ligase that mediates ubiquitination and subsequent proteasomal degradation of target proteins. E3 ubiquitin ligases accept ubiquitin from an E2 ubiquitin-conjugating enzyme in the form of a thioester and then directly transfers the ubiquitin to targeted substrates. It probably triggers the ubiquitin-mediated degradation of different substrates. This Arabidopsis thaliana (Mouse-ear cress) protein is E3 ubiquitin-protein ligase SINA-like 3.